The sequence spans 277 residues: Undecaprenyl-diphosphatase (277 aa).

The next 8 helical transmembrane spans lie at 19 to 39 (FLPV…PFYG), 44 to 64 (FDDL…LFLY), 89 to 109 (FHFL…GFIA), 122 to 142 (LLEI…VAEW), 154 to 174 (IGFK…IPGM), 195 to 215 (AEFS…YKLI), 224 to 244 (NTIP…TLVI), and 257 to 277 (SVFG…TKLI).

It belongs to the UppP family.

The protein resides in the cell inner membrane. The enzyme catalyses di-trans,octa-cis-undecaprenyl diphosphate + H2O = di-trans,octa-cis-undecaprenyl phosphate + phosphate + H(+). In terms of biological role, catalyzes the dephosphorylation of undecaprenyl diphosphate (UPP). Confers resistance to bacitracin. In Leptospira interrogans serogroup Icterohaemorrhagiae serovar copenhageni (strain Fiocruz L1-130), this protein is Undecaprenyl-diphosphatase.